Consider the following 205-residue polypeptide: GTP cyclohydrolase 1 (205 aa).

The Zn(2+) site is built by Cys-94, His-97, and Cys-165.

The protein belongs to the GTP cyclohydrolase I family. Homomer.

The catalysed reaction is GTP + H2O = 7,8-dihydroneopterin 3'-triphosphate + formate + H(+). It participates in cofactor biosynthesis; 7,8-dihydroneopterin triphosphate biosynthesis; 7,8-dihydroneopterin triphosphate from GTP: step 1/1. In Sinorhizobium fredii (strain NBRC 101917 / NGR234), this protein is GTP cyclohydrolase 1.